A 445-amino-acid polypeptide reads, in one-letter code: Methyl-CpG-binding domain protein 4-like protein (445 aa).

Asp429 is an active-site residue.

As to expression, isoform 1 and isoform 4: Expressed in leaves and flowers, but not in roots or stems.

The protein localises to the nucleus. Monofunctional DNA glycosylase targeting U:G and T:G mispairs. Excises uracil derivatives and exhibits a preference for a CpG sequence context, irrespective of the methylation status of the complementary strand. The activity follows a biphasic kinetics, with an initial burst of product accumulation followed by a slower phase. Specifically binds its reaction product. Triggers the base excision repair (BER) pathway. This chain is Methyl-CpG-binding domain protein 4-like protein, found in Arabidopsis thaliana (Mouse-ear cress).